A 496-amino-acid chain; its full sequence is Genome polyprotein (496 aa).

At 1-447 the chain is on the extracellular side; it reads SRCTHLENRD…HTVLGGAFNS (447 aa). 6 disulfide bridges follow: cysteine 3/cysteine 30, cysteine 60/cysteine 116, cysteine 60/cysteine 121, cysteine 74/cysteine 105, cysteine 92/cysteine 116, and cysteine 92/cysteine 121. The segment at 98–111 is fusion peptide; it reads DRGWGNHCGLFGKG. Asparagine 154 is a glycosylation site (N-linked (GlcNAc...) asparagine; by host). 2 disulfides stabilise this stretch: cysteine 186/cysteine 290 and cysteine 307/cysteine 338. Residues 448–468 traverse the membrane as a helical segment; it reads IFGGVGFLPKLLMGVALAWLG. The Cytoplasmic portion of the chain corresponds to 469–479; that stretch reads LNTRNPTMSMS. A helical transmembrane segment spans residues 480-496; that stretch reads FLLAGGLVLAMTLGVGA.

In terms of assembly, homodimer; in the endoplasmic reticulum and Golgi. In terms of processing, N-glycosylated.

The protein resides in the virion membrane. It is found in the host endoplasmic reticulum membrane. Functionally, binds to host cell surface receptor and mediates fusion between viral and cellular membranes. Envelope protein is synthesized in the endoplasmic reticulum in the form of heterodimer with protein prM. They play a role in virion budding in the ER, and the newly formed immature particle is covered with 60 spikes composed of heterodimer between precursor prM and envelope protein E. The virion is transported to the Golgi apparatus where the low pH causes dissociation of PrM-E heterodimers and formation of E homodimers. prM-E cleavage is ineficient, and many virions are only partially matured. These uncleaved prM would play a role in immune evasion. The chain is Genome polyprotein from Bos taurus (Bovine).